Consider the following 431-residue polypeptide: Enolase (431 aa).

Gln163 lines the (2R)-2-phosphoglycerate pocket. Glu205 (proton donor) is an active-site residue. The Mg(2+) site is built by Asp242, Glu288, and Asp315. (2R)-2-phosphoglycerate is bound by residues Lys340, Arg369, Ser370, and Lys391. Lys340 functions as the Proton acceptor in the catalytic mechanism.

The protein belongs to the enolase family. It depends on Mg(2+) as a cofactor.

The protein localises to the cytoplasm. Its subcellular location is the secreted. It is found in the cell surface. It carries out the reaction (2R)-2-phosphoglycerate = phosphoenolpyruvate + H2O. It functions in the pathway carbohydrate degradation; glycolysis; pyruvate from D-glyceraldehyde 3-phosphate: step 4/5. Its function is as follows. Catalyzes the reversible conversion of 2-phosphoglycerate (2-PG) into phosphoenolpyruvate (PEP). It is essential for the degradation of carbohydrates via glycolysis. In Latilactobacillus sakei subsp. sakei (strain 23K) (Lactobacillus sakei subsp. sakei), this protein is Enolase.